Reading from the N-terminus, the 3411-residue chain is Genome polyprotein (3411 aa).

The Cytoplasmic segment spans residues 1-104; it reads MSGRKAQGKT…LSSRKRRSHD (104 aa). Residues 38 to 72 are hydrophobic; homodimerization of capsid protein C; that stretch reads PGPSRGVQGFIFFFLFNILTGKKITAHLKRLWKML. Residues 102–121 constitute a propeptide, ER anchor for the capsid protein C, removed in mature form by serine protease NS3; the sequence is SHDVLTVQFLILGMLLMTGG. A helical membrane pass occupies residues 105–125; that stretch reads VLTVQFLILGMLLMTGGVTLV. Residues 126–244 are Extracellular-facing; the sequence is RKNRWLLLNV…GERQLQKIER (119 aa). 2 N-linked (GlcNAc...) asparagine; by host glycosylation sites follow: N134 and N150. Residues 245 to 265 form a helical membrane-spanning segment; that stretch reads WFVRNPFFAVTALTIAYLVGS. The Cytoplasmic segment spans residues 266–270; sequence NMTQR. A helical membrane pass occupies residues 271-285; it reads VVIALLVLAVGPAYS. The Extracellular portion of the chain corresponds to 286-730; the sequence is AHCIGITDRD…TVFGSAFQGL (445 aa). Intrachain disulfides connect C288/C315, C345/C401, C345/C406, C359/C390, C377/C401, C377/C406, C467/C568, and C585/C615. The fusion peptide stretch occupies residues 383 to 396; it reads DRGWGNGCGLFGKG. The helical transmembrane segment at 731 to 751 threads the bilayer; that stretch reads FGGLNWITKVIMGAVLIWVGI. Topologically, residues 752–757 are extracellular; it reads NTRNMT. The helical transmembrane segment at 758 to 778 threads the bilayer; the sequence is MSMSMILVGVIMMFLSLGVGA. Residues 779–1132 lie on the Extracellular side of the membrane; sequence DQGCAINFGK…LVRSWVTAGE (354 aa). Intrachain disulfides connect C782-C793, C833-C921, C957-C1002, C1058-C1107, C1069-C1091, and C1090-C1094. N-linked (GlcNAc...) asparagine; by host glycans are attached at residues N908 and N986. A helical membrane pass occupies residues 1133–1153; the sequence is IHAVPFGLVSMMIAMEVVLRK. Residues 1154-1201 lie on the Cytoplasmic side of the membrane; it reads RQGPKQMLVGGVVLLGAMLVGQVTLLDLLKLTVAVGLHFHEMNNGGDA. A helical transmembrane segment spans residues 1202-1222; that stretch reads MYMALIAAFSIRPGLLIGFGL. Topologically, residues 1223–1287 are lumenal; the sequence is RTLWSPRERL…ILPLMALLTP (65 aa). The helical transmembrane segment at 1288–1308 threads the bilayer; sequence VTMAEVRLAAMFFCAVVIIGV. Over 1309–1355 the chain is Cytoplasmic; sequence LHQNFKDTSMQKTIPLVALTLTSYLGLTQPFLGLCAFLATRIFGRRS. A helical membrane pass occupies residues 1356–1376; sequence IPVNEALAAAGLVGVLAGLAF. Topologically, residues 1377–1378 are lumenal; sequence QE. The helical transmembrane segment at 1379–1399 threads the bilayer; that stretch reads MENFLGPIAVGGLLMMLVSVA. Topologically, residues 1400–1456 are cytoplasmic; the sequence is GRVDGLELKKLGEVSWEEEAEISGSSARYDVALSEQGEFKLLSEEKVPWDQVVMTSL. The interval 1407-1446 is interacts with and activates NS3 protease; that stretch reads LKKLGEVSWEEEAEISGSSARYDVALSEQGEFKLLSEEKV. The segment at residues 1457-1477 is an intramembrane region (helical); it reads ALVGAALHPFALLLVLAGWLF. At 1478–2157 the chain is on the cytoplasmic side; it reads HVRGARRSGD…RNALSMMPEA (680 aa). A Peptidase S7 domain is found at 1485–1665; that stretch reads SGDVLWDIPT…EVKEEGKEEL (181 aa). Residues H1537, D1561, and S1622 each act as charge relay system; for serine protease NS3 activity in the active site. The Helicase ATP-binding domain maps to 1669–1825; that stretch reads PTMLKKGMTT…HSNGEIEDVQ (157 aa). Residues 1673 to 1676 are important for RNA-binding; that stretch reads KKGM. 1682–1689 contributes to the ATP binding site; sequence FHPGAGKT. The short motif at 1773 to 1776 is the DEAH box element; the sequence is DEAH. Residues 1820 to 1997 form the Helicase C-terminal domain; it reads EIEDVQTDIP…VRGGMVAPLY (178 aa). An N6-acetyllysine; by host modification is found at K1877. The chain crosses the membrane as a helical span at residues 2158-2178; it reads MTIVMLFILAGLLTSGMVIFF. Residues 2179–2186 are Lumenal-facing; the sequence is MSPKGISR. An intramembrane region (helical) is located at residues 2187–2207; the sequence is MSMAMGTMAGCGYLMFLGGVK. The Lumenal segment spans residues 2208–2209; the sequence is PT. A helical membrane pass occupies residues 2210-2230; that stretch reads HISYVMLIFFVLMVVVIPEPG. Residues 2231 to 2241 lie on the Cytoplasmic side of the membrane; it reads QQRSIQDNQVA. Residues 2242-2262 form a helical membrane-spanning segment; sequence YLIIGILTLVSAVAANELGML. The Lumenal segment spans residues 2263–2293; sequence EKTKEDLFGKKNLIPSSASPWSWPDLDLKPG. The segment at residues 2294-2314 is an intramembrane region (helical); it reads AAWTVYVGIVTMLSPMLHHWI. The Lumenal segment spans residues 2315-2360; it reads KVEYGNLSLSGIAQSASVLSFMDKGIPFMKMNISVIMLLVSGWNSI. Residues 2361 to 2381 traverse the membrane as a helical segment; it reads TVMPLLCGIGCAMLHWSLILP. The Cytoplasmic segment spans residues 2382 to 2421; the sequence is GIKAQQSKLAQRRVFHGVAENPVVDGNPTVDIEEAPEMPA. The helical transmembrane segment at 2422–2442 threads the bilayer; it reads LYEKKLALYLLLALSLASVAM. At 2443–2445 the chain is on the lumenal side; sequence CRT. The chain crosses the membrane as a helical span at residues 2446–2466; the sequence is PFSLAEGIVLASAALGPLIEG. The Cytoplasmic segment spans residues 2467 to 3411; that stretch reads NTSLLWNGPM…DADLQLGELI (945 aa). Positions 2507–2771 constitute an mRNA cap 0-1 NS5-type MT domain; it reads GSANGKTLGE…DVILPIGTRS (265 aa). S2562 contributes to the S-adenosyl-L-methionine binding site. Position 2562 is a phosphoserine (S2562). The active-site For 2'-O-MTase activity is the K2567. Residues G2592, W2593, T2610, L2611, D2637, and I2638 each coordinate S-adenosyl-L-methionine. D2652 (for 2'-O-MTase activity) is an active-site residue. Residue I2653 participates in S-adenosyl-L-methionine binding. Catalysis depends on for 2'-O-MTase activity residues K2688 and E2724. Y2726 contributes to the S-adenosyl-L-methionine binding site. Positions 2878 to 2911 match the Nuclear localization signal motif; that stretch reads RKIMKVVNRWLFRHLAREKNPRLCTKEEFIAKVR. Residues E2945, H2949, C2954, and C2957 each contribute to the Zn(2+) site. Residues 3035 to 3187 enclose the RdRp catalytic domain; it reads GGFYADDTAG…RPIDDRFGLA (153 aa). Residues H3222, C3238, and C3357 each coordinate Zn(2+).

The protein in the N-terminal section; belongs to the class I-like SAM-binding methyltransferase superfamily. mRNA cap 0-1 NS5-type methyltransferase family. As to quaternary structure, homodimer. Interacts (via N-terminus) with host EXOC1 (via C-terminus); this interaction results in EXOC1 degradation through the proteasome degradation pathway. In terms of assembly, forms heterodimers with envelope protein E in the endoplasmic reticulum and Golgi. Homodimer; in the endoplasmic reticulum and Golgi. Interacts with protein prM. Interacts with non-structural protein 1. As to quaternary structure, homodimer; Homohexamer when secreted. Interacts with envelope protein E. In terms of assembly, interacts (via N-terminus) with serine protease NS3. Forms a heterodimer with serine protease NS3. May form homooligomers. As to quaternary structure, forms a heterodimer with NS2B. Interacts with non-structural protein 2A (via N-terminus). Interacts with NS4B. Interacts with unphosphorylated RNA-directed RNA polymerase NS5; this interaction stimulates RNA-directed RNA polymerase NS5 guanylyltransferase activity. NS3 interacts with host PDCD6IP; this interaction contributes to virion release. In terms of assembly, interacts with serine protease NS3. Homodimer. Interacts with host STAT2; this interaction prevents the establishment of cellular antiviral state. Interacts with serine protease NS3. Interacts with host TRIM23; this interaction leads to NS5 ubiquitination. In terms of processing, specific enzymatic cleavages in vivo yield mature proteins. The nascent capsid protein C contains a C-terminal hydrophobic domain that act as a signal sequence for translocation of prM into the lumen of the ER. Mature capsid protein C is cleaved at a site upstream of this hydrophobic domain by NS3. prM is cleaved in post-Golgi vesicles by a host furin, releasing the mature small envelope protein M, and peptide pr. Non-structural protein 2A-alpha, a C-terminally truncated form of non-structural protein 2A, results from partial cleavage by NS3. Specific enzymatic cleavages in vivo yield mature proteins peptide 2K acts as a signal sequence and is removed from the N-terminus of NS4B by the host signal peptidase in the ER lumen. Signal cleavage at the 2K-4B site requires a prior NS3 protease-mediated cleavage at the 4A-2K site. Cleaved in post-Golgi vesicles by a host furin, releasing the mature small envelope protein M, and peptide pr. This cleavage is incomplete as up to 30% of viral particles still carry uncleaved prM. Post-translationally, N-glycosylated. In terms of processing, N-glycosylated. The excreted form is glycosylated and this is required for efficient secretion of the protein from infected cells. Polyubiquitinated; ubiquitination is probably mediated by host TRIM23 and is prerequisite for NS5-STAT2 interaction. NS5 is not ISGylated or sumoylated. Post-translationally, acetylated by host KAT5. Acetylation modulates NS3 RNA-binding and unwinding activities and plays an important positive role for viral replication. In terms of processing, phosphorylated on serines residues. This phosphorylation may trigger NS5 nuclear localization.

Its subcellular location is the virion. It localises to the host nucleus. It is found in the host cytoplasm. The protein resides in the host perinuclear region. The protein localises to the secreted. Its subcellular location is the virion membrane. It localises to the host endoplasmic reticulum membrane. The enzyme catalyses Selective hydrolysis of -Xaa-Xaa-|-Yaa- bonds in which each of the Xaa can be either Arg or Lys and Yaa can be either Ser or Ala.. It carries out the reaction RNA(n) + a ribonucleoside 5'-triphosphate = RNA(n+1) + diphosphate. It catalyses the reaction a ribonucleoside 5'-triphosphate + H2O = a ribonucleoside 5'-diphosphate + phosphate + H(+). The catalysed reaction is ATP + H2O = ADP + phosphate + H(+). The enzyme catalyses a 5'-end (5'-triphosphoguanosine)-ribonucleoside in mRNA + S-adenosyl-L-methionine = a 5'-end (N(7)-methyl 5'-triphosphoguanosine)-ribonucleoside in mRNA + S-adenosyl-L-homocysteine. It carries out the reaction a 5'-end (N(7)-methyl 5'-triphosphoguanosine)-ribonucleoside in mRNA + S-adenosyl-L-methionine = a 5'-end (N(7)-methyl 5'-triphosphoguanosine)-(2'-O-methyl-ribonucleoside) in mRNA + S-adenosyl-L-homocysteine + H(+). Plays a role in virus budding by binding to the cell membrane and gathering the viral RNA into a nucleocapsid that forms the core of a mature virus particle. During virus entry, may induce genome penetration into the host cytoplasm after hemifusion induced by the surface proteins. Can migrate to the cell nucleus where it modulates host functions. In terms of biological role, inhibits RNA silencing by interfering with host Dicer. Its function is as follows. Prevents premature fusion activity of envelope proteins in trans-Golgi by binding to envelope protein E at pH6.0. After virion release in extracellular space, gets dissociated from E dimers. Functionally, acts as a chaperone for envelope protein E during intracellular virion assembly by masking and inactivating envelope protein E fusion peptide. prM is the only viral peptide matured by host furin in the trans-Golgi network probably to avoid catastrophic activation of the viral fusion activity in acidic Golgi compartment prior to virion release. prM-E cleavage is inefficient, and many virions are only partially matured. These uncleaved prM would play a role in immune evasion. May play a role in virus budding. Exerts cytotoxic effects by activating a mitochondrial apoptotic pathway through M ectodomain. May display a viroporin activity. In terms of biological role, binds to host cell surface receptor and mediates fusion between viral and cellular membranes. Envelope protein is synthesized in the endoplasmic reticulum in the form of heterodimer with protein prM. They play a role in virion budding in the ER, and the newly formed immature particle is covered with 60 spikes composed of heterodimer between precursor prM and envelope protein E. The virion is transported to the Golgi apparatus where the low pH causes dissociation of PrM-E heterodimers and formation of E homodimers. prM-E cleavage is inefficient, and many virions are only partially matured. These uncleaved prM would play a role in immune evasion. Its function is as follows. Involved in immune evasion, pathogenesis and viral replication. Once cleaved off the polyprotein, is targeted to three destinations: the viral replication cycle, the plasma membrane and the extracellular compartment. Essential for viral replication. Required for formation of the replication complex and recruitment of other non-structural proteins to the ER-derived membrane structures. Excreted as a hexameric lipoparticle that plays a role against host immune response. Antagonizing the complement function. Binds to the host macrophages and dendritic cells. Inhibits signal transduction originating from Toll-like receptor 3 (TLR3). Functionally, component of the viral RNA replication complex that functions in virion assembly and antagonizes the host immune response. Required cofactor for the serine protease function of NS3. May have membrane-destabilizing activity and form viroporins. In terms of biological role, displays three enzymatic activities: serine protease, NTPase and RNA helicase. NS3 serine protease, in association with NS2B, performs its autocleavage and cleaves the polyprotein at dibasic sites in the cytoplasm: C-prM, NS2A-NS2B, NS2B-NS3, NS3-NS4A, NS4A-2K and NS4B-NS5. NS3 RNA helicase binds RNA and unwinds dsRNA in the 3' to 5' direction. Also plays a role in virus assembly. Its function is as follows. Regulates the ATPase activity of the NS3 helicase activity. NS4A allows NS3 helicase to conserve energy during unwinding. Functionally, functions as a signal peptide for NS4B and is required for the interferon antagonism activity of the latter. Induces the formation of ER-derived membrane vesicles where the viral replication takes place. Inhibits interferon (IFN)-induced host STAT1 phosphorylation and nuclear translocation, thereby preventing the establishment of cellular antiviral state by blocking the IFN-alpha/beta pathway. In terms of biological role, replicates the viral (+) and (-) RNA genome, and performs the capping of genomes in the cytoplasm. NS5 methylates viral RNA cap at guanine N-7 and ribose 2'-O positions. Besides its role in RNA genome replication, also prevents the establishment of cellular antiviral state by blocking the interferon-alpha/beta (IFN-alpha/beta) signaling pathway. IFN-I induces binding of NS5 to host IFN-activated transcription factor STAT2, preventing its transcriptional activity. Host TRIM23 is the E3 ligase that interacts with and polyubiquitinates NS5 to promote its binding to STAT2 and trigger IFN-I signaling inhibition. The sequence is that of Genome polyprotein from Aedes aegypti (Yellowfever mosquito).